The chain runs to 211 residues: Nucleoside triphosphate pyrophosphatase (211 aa).

Aspartate 75 serves as the catalytic Proton acceptor.

It belongs to the Maf family. The cofactor is a divalent metal cation.

The protein resides in the cytoplasm. The catalysed reaction is a ribonucleoside 5'-triphosphate + H2O = a ribonucleoside 5'-phosphate + diphosphate + H(+). It carries out the reaction a 2'-deoxyribonucleoside 5'-triphosphate + H2O = a 2'-deoxyribonucleoside 5'-phosphate + diphosphate + H(+). Functionally, nucleoside triphosphate pyrophosphatase. May have a dual role in cell division arrest and in preventing the incorporation of modified nucleotides into cellular nucleic acids. In Prochlorococcus marinus (strain NATL2A), this protein is Nucleoside triphosphate pyrophosphatase.